The sequence spans 142 residues: Acidic phospholipase A2 KBf-grIB (142 aa).

Intrachain disulfides connect Cys-28–Cys-94, Cys-44–Cys-141, Cys-46–Cys-62, Cys-61–Cys-122, Cys-68–Cys-115, Cys-78–Cys-108, and Cys-101–Cys-113. Positions 45, 47, and 49 each coordinate Ca(2+). The active site involves His-65. Asp-66 contacts Ca(2+). Asp-116 is a catalytic residue.

This sequence belongs to the phospholipase A2 family. Group I subfamily. D49 sub-subfamily. The cofactor is Ca(2+). As to expression, expressed by the venom gland.

It localises to the secreted. It carries out the reaction a 1,2-diacyl-sn-glycero-3-phosphocholine + H2O = a 1-acyl-sn-glycero-3-phosphocholine + a fatty acid + H(+). In terms of biological role, PLA2 catalyzes the calcium-dependent hydrolysis of the 2-acyl groups in 3-sn-phosphoglycerides. This Bungarus fasciatus (Banded krait) protein is Acidic phospholipase A2 KBf-grIB.